The chain runs to 419 residues: UDP-arabinose 4-epimerase 1 (419 aa).

Positions 1–21 are disordered; it reads MFSFGRARSQGRQNRSMSLGG. The Cytoplasmic portion of the chain corresponds to 1-32; sequence MFSFGRARSQGRQNRSMSLGGLDYADPKKKNN. A helical; Signal-anchor for type II membrane protein transmembrane segment spans residues 33 to 51; it reads YLGKILLTASLTALCIFML. Over 52–419 the chain is Lumenal; sequence KQSPTFNTPS…GLTTSSVSVY (368 aa). 72–103 is a binding site for NAD(+); the sequence is HVLVTGGAGYIGSHAALRLLKESYRVTIVDNL. Tyr220 serves as the catalytic Proton acceptor.

It belongs to the NAD(P)-dependent epimerase/dehydratase family. Requires NAD(+) as cofactor. As to expression, high expression in roots. Also found in leaves, stems, flowers, and siliques.

It is found in the golgi apparatus. It localises to the golgi stack membrane. It carries out the reaction UDP-beta-L-arabinopyranose = UDP-alpha-D-xylose. Its pathway is nucleotide-sugar biosynthesis; UDP-L-arabinose biosynthesis; UDP-L-arabinose from UDP-alpha-D-xylose: step 1/1. It functions in the pathway cell wall biogenesis; cell wall polysaccharide biosynthesis. Its function is as follows. Acts as a UDP-D-xylose 4-epimerase but lacks both UDP-D-glucose and UDP-D-glucuronic acid 4-epimerase activities in vitro. This is UDP-arabinose 4-epimerase 1 from Arabidopsis thaliana (Mouse-ear cress).